The sequence spans 564 residues: Dihydroxy-acid dehydratase (564 aa).

Mg(2+) is bound at residue Asp-80. Cys-121 is a [2Fe-2S] cluster binding site. Mg(2+) is bound by residues Asp-122 and Lys-123. Lys-123 carries the N6-carboxylysine modification. Cys-194 lines the [2Fe-2S] cluster pocket. Glu-447 provides a ligand contact to Mg(2+). The active-site Proton acceptor is Ser-473.

Belongs to the IlvD/Edd family. Homodimer. [2Fe-2S] cluster serves as cofactor. Mg(2+) is required as a cofactor.

The catalysed reaction is (2R)-2,3-dihydroxy-3-methylbutanoate = 3-methyl-2-oxobutanoate + H2O. It carries out the reaction (2R,3R)-2,3-dihydroxy-3-methylpentanoate = (S)-3-methyl-2-oxopentanoate + H2O. Its pathway is amino-acid biosynthesis; L-isoleucine biosynthesis; L-isoleucine from 2-oxobutanoate: step 3/4. It functions in the pathway amino-acid biosynthesis; L-valine biosynthesis; L-valine from pyruvate: step 3/4. Functionally, functions in the biosynthesis of branched-chain amino acids. Catalyzes the dehydration of (2R,3R)-2,3-dihydroxy-3-methylpentanoate (2,3-dihydroxy-3-methylvalerate) into 2-oxo-3-methylpentanoate (2-oxo-3-methylvalerate) and of (2R)-2,3-dihydroxy-3-methylbutanoate (2,3-dihydroxyisovalerate) into 2-oxo-3-methylbutanoate (2-oxoisovalerate), the penultimate precursor to L-isoleucine and L-valine, respectively. This is Dihydroxy-acid dehydratase from Listeria innocua serovar 6a (strain ATCC BAA-680 / CLIP 11262).